Here is a 111-residue protein sequence, read N- to C-terminus: Large ribosomal subunit protein uL22 (111 aa).

Belongs to the universal ribosomal protein uL22 family. Part of the 50S ribosomal subunit.

In terms of biological role, this protein binds specifically to 23S rRNA; its binding is stimulated by other ribosomal proteins, e.g. L4, L17, and L20. It is important during the early stages of 50S assembly. It makes multiple contacts with different domains of the 23S rRNA in the assembled 50S subunit and ribosome. Functionally, the globular domain of the protein is located near the polypeptide exit tunnel on the outside of the subunit, while an extended beta-hairpin is found that lines the wall of the exit tunnel in the center of the 70S ribosome. This chain is Large ribosomal subunit protein uL22, found in Acholeplasma laidlawii.